The chain runs to 241 residues: Phosphatidylcholine synthase (241 aa).

The Cytoplasmic segment spans residues 1-15 (MKFFNYRRVPYAEIR). The helical transmembrane segment at 16 to 36 (AFSVHILTASGSFLAFLGVVA) threads the bilayer. At 37-41 (AAEHR) the chain is on the periplasmic side. Residues 42–62 (FVDMFWWLGLALLVDGIDGPI) traverse the membrane as a helical segment. Topologically, residues 63–76 (ARKVQVKEVLPNWS) are cytoplasmic. The helical transmembrane segment at 77–97 (GDTLDNVIDYVTYVLLPAFAL) threads the bilayer. The Periplasmic segment spans residues 98 to 100 (YQS). A helical transmembrane segment spans residues 101 to 121 (GMIGEPWSFVAAGAIVVSSAI). At 122–133 (YYADMGMKTDEY) the chain is on the cytoplasmic side. Residues 134–154 (FFSGFPVVWNMVVFTLFVIQA) traverse the membrane as a helical segment. Residues 155–156 (SE) are Periplasmic-facing. A helical membrane pass occupies residues 157–177 (VTASIVVFLSVILTFLPINFL). At 178 to 187 (HPVRVKRLRP) the chain is on the cytoplasmic side. Residues 188 to 208 (LNLGIFLVWSVLGMYALLLHF) traverse the membrane as a helical segment. The Periplasmic portion of the chain corresponds to 209-211 (ETP). The helical transmembrane segment at 212–232 (PWVVVGVVATGLYLYVIGFIL) threads the bilayer. Residues 233 to 241 (QIFPKLGRA) lie on the Cytoplasmic side of the membrane.

Belongs to the CDP-alcohol phosphatidyltransferase class-I family. Mn(2+) is required as a cofactor.

The protein localises to the cell inner membrane. It catalyses the reaction a CDP-1,2-diacyl-sn-glycerol + choline = a 1,2-diacyl-sn-glycero-3-phosphocholine + CMP + H(+). With respect to regulation, activated by CDP-diacylglycerol especially in the presence of Triton X-100 (0.1% w/v) at concentrations where micelles are formed. Maximal activation by Triton X-100 at 0.2% w/v, but higher concentrations become inhibitory. Inhibited by EDTA and high concentrations of choline. Its function is as follows. Condenses choline with CDP-diglyceride to produce phosphatidylcholine and CMP. This chain is Phosphatidylcholine synthase (pcs), found in Rhizobium meliloti (strain 1021) (Ensifer meliloti).